The sequence spans 104 residues: Large ribosomal subunit protein bL21 (104 aa).

It belongs to the bacterial ribosomal protein bL21 family. In terms of assembly, part of the 50S ribosomal subunit. Contacts protein L20.

Its function is as follows. This protein binds to 23S rRNA in the presence of protein L20. The protein is Large ribosomal subunit protein bL21 of Granulibacter bethesdensis (strain ATCC BAA-1260 / CGDNIH1).